We begin with the raw amino-acid sequence, 332 residues long: Clavesin-1 (332 aa).

One can recognise a CRAL-TRIO domain in the interval 96–257 (IKRALMDGFP…EFGGTLPPYD (162 aa)). A disordered region spans residues 300 to 332 (KYMKRSHSVVEPGTLRHEEERENENTQPLLALD). Basic and acidic residues predominate over residues 313–323 (TLRHEEERENE).

It is found in the golgi apparatus. The protein localises to the trans-Golgi network membrane. Its subcellular location is the early endosome membrane. It localises to the cytoplasmic vesicle. The protein resides in the clathrin-coated vesicle. In terms of biological role, required for normal morphology of late endosomes and/or lysosomes in neurons. Binds phosphatidylinositol 3,5-bisphosphate (PtdIns(3,5)P2). This Xenopus laevis (African clawed frog) protein is Clavesin-1 (clvs1).